A 223-amino-acid polypeptide reads, in one-letter code: UPF0758 protein Tgr7_0100 (223 aa).

Positions 102-223 (ALTSPDDTRR…LVSFAERGLL (122 aa)) constitute an MPN domain. Residues His-173, His-175, and Asp-186 each contribute to the Zn(2+) site. The JAMM motif signature appears at 173-186 (HNHPSGVAEPSRSD).

This sequence belongs to the UPF0758 family.

The protein is UPF0758 protein Tgr7_0100 of Thioalkalivibrio sulfidiphilus (strain HL-EbGR7).